Reading from the N-terminus, the 1168-residue chain is Zinc finger CCHC domain-containing protein 2 (1168 aa).

Disordered stretches follow at residues 1–87, 209–242, 561–693, and 932–978; these read MLRM…GGHA, EGSRGSVEDEPGGDDEQDAEKDGPGPEGGGCAKL, KRSL…LGTE, and ATSA…SDST. The segment covering 43-66 has biased composition (pro residues); sequence PPPPPPTGLPRGPPPPPPSPPRGL. Over residues 67-78 the composition is skewed to low complexity; it reads EPPVASGPTAGA. Positions 216–227 are enriched in acidic residues; the sequence is EDEPGGDDEQDA. The segment covering 233 to 242 has biased composition (gly residues); that stretch reads GPEGGGCAKL. Residues 574–588 show a composition bias toward basic and acidic residues; that stretch reads PQVEKEKIKKTENRL. Low complexity predominate over residues 626–635; sequence SSESYSSPSS. Residues 636 to 655 show a composition bias toward basic and acidic residues; it reads PRHDGRESLESEEEKDRDTD. Over residues 932–949 the composition is skewed to polar residues; the sequence is ATSAQPASTGISPAQSTV. Residues 951 to 965 show a composition bias toward pro residues; the sequence is PAVPTHTPGPAPSPS. The span at 966 to 978 shows a compositional bias: polar residues; it reads PALTHSTAQSDST. The CCHC-type zinc-finger motif lies at 1121–1138; sequence VSCYNCGVSGHYAQDCKQ.

The polypeptide is Zinc finger CCHC domain-containing protein 2 (Zcchc2) (Rattus norvegicus (Rat)).